The sequence spans 479 residues: Replication factor C large subunit (479 aa).

ATP is bound at residue 50–57; the sequence is GPPGSGKT. The span at 420-468 shows a compositional bias: basic and acidic residues; the sequence is EKIRKERKEEEKVEVREEKPEEKVEEKREERETKKEKEKKEEKKAEKKG. Residues 420 to 479 form a disordered region; it reads EKIRKERKEEEKVEVREEKPEEKVEEKREERETKKEKEKKEEKKAEKKGKQVTLFDFIKK.

It belongs to the activator 1 small subunits family. RfcL subfamily. In terms of assembly, heterohexamer composed of four small subunits (RfcS) and two large subunits (RfcL).

In terms of biological role, part of the RFC clamp loader complex which loads the PCNA sliding clamp onto DNA. The complex possesses DNA-independent ATPase activity. The protein is Replication factor C large subunit (rfcL) of Pyrococcus abyssi (strain GE5 / Orsay).